The following is a 382-amino-acid chain: Beta-lactamase CMY-10 (382 aa).

The signal sequence occupies residues 1-23 (MQQRQSILWGAVATLMWAGLAHA). The Acyl-ester intermediate role is filled by S88. S88 serves as a coordination point for AMP. GMP is bound by residues S88, Q144, Y174, T336, S338, and N363. S88, Q144, Y174, T336, S338, and N363 together coordinate IMP. Y174 is an AMP binding site. S338 provides a ligand contact to AMP.

It belongs to the class-C beta-lactamase family. In terms of assembly, monomer.

The catalysed reaction is a beta-lactam + H2O = a substituted beta-amino acid. Inhibited by various nucleotides in vitro, including adenosine 5'-(P-acetyl)monophosphate (acAMP), inosine-5'-monophosphate (IMP) and guanosine-5'-monophosphate (GMP); IMP and GMP exhibit strongest competitive inhibition. Inhibited by the beta-lactamase-blocking agent, avibactam. Inhibited by clavulanic acid. Weakly inhibited by citric acid. In terms of biological role, class C beta-lactamase which confers resistance to penicillins and cephalosporins. Has benzylpenicillin-, ceftazidime-, nitrocefin- and imipenem-hydrolyzing activity. The polypeptide is Beta-lactamase CMY-10 (Klebsiella aerogenes (Enterobacter aerogenes)).